A 500-amino-acid chain; its full sequence is Oryzalexin D synthase (500 aa).

A helical transmembrane segment spans residues 4 to 24; sequence SQMWLLWGALSVALFFYFSTL. Cys-442 is a heme binding site.

Belongs to the cytochrome P450 family. It depends on heme as a cofactor.

The protein resides in the membrane. It carries out the reaction ent-cassa-12,15-diene + reduced [NADPH--hemoprotein reductase] + O2 = ent-11beta-hydroxycassa-12,15-diene + oxidized [NADPH--hemoprotein reductase] + H2O + H(+). It catalyses the reaction ent-sandaracopimaradien-3beta-ol + reduced [NADPH--hemoprotein reductase] + O2 = oryzalexin D + oxidized [NADPH--hemoprotein reductase] + H2O + H(+). Enzyme of the diterpenoid metabolism involved in the biosynthesis of both phytocassane and the oryzalexin class of phytoalexins. Can hydroxylate syn-pimaradiene, ent-pimaradiene, ent-sandaracopimaradiene, ent-isokaurene, ent-kaurene, and ent-cassadiene, but no activity with syn-stemodene, syn-stemarene, syn-labdatriene, C11-alpha-hydroxy-ent-cassadiene or syn-pimadien-19-oic acid as substrates. Hydroxylates 3-alpha-hydroxy-ent-sandaracopimaradiene at C-7-beta, resulting in a 3-alpha,7-beta-diol corresponding to oryzalexins D. The polypeptide is Oryzalexin D synthase (Oryza sativa subsp. japonica (Rice)).